The following is a 358-amino-acid chain: Peptide chain release factor 1 (358 aa).

Gln233 is modified (N5-methylglutamine).

It belongs to the prokaryotic/mitochondrial release factor family. Methylated by PrmC. Methylation increases the termination efficiency of RF1.

The protein resides in the cytoplasm. In terms of biological role, peptide chain release factor 1 directs the termination of translation in response to the peptide chain termination codons UAG and UAA. This Listeria monocytogenes serotype 4b (strain CLIP80459) protein is Peptide chain release factor 1.